The chain runs to 380 residues: Cytochrome b (380 aa).

The next 4 membrane-spanning stretches (helical) occupy residues 33–53, 77–98, 113–133, and 178–198; these read FGSLLGLCLLTQILTGLFLAM, WLIRNFHANGASFFFICLYLHI, WNVGVVLFLLVMMTAFVGYVL, and FFAFHFLFPFIIAAMTILHFL. The heme b site is built by His-83 and His-97. 2 residues coordinate heme b: His-182 and His-196. A ubiquinone is bound at residue His-201. The next 4 helical transmembrane spans lie at 226 to 246, 288 to 308, 320 to 340, and 347 to 367; these read YKDLLGFVVMLLALSTLSLFS, LGGVLALLSSILILMLVPILH, LTQILFWVLVADVAILTWIGG, and FIIVGQVASVLYFALFLVIMP.

The protein belongs to the cytochrome b family. The cytochrome bc1 complex contains 3 respiratory subunits (MT-CYB, CYC1 and UQCRFS1), 2 core proteins (UQCRC1 and UQCRC2) and probably 6 low-molecular weight proteins. Requires heme b as cofactor.

The protein localises to the mitochondrion inner membrane. Component of the ubiquinol-cytochrome c reductase complex (complex III or cytochrome b-c1 complex) that is part of the mitochondrial respiratory chain. The b-c1 complex mediates electron transfer from ubiquinol to cytochrome c. Contributes to the generation of a proton gradient across the mitochondrial membrane that is then used for ATP synthesis. The protein is Cytochrome b (mt-cyb) of Zeus faber (John Dory).